We begin with the raw amino-acid sequence, 239 residues long: Norbelladine 4'-O-methyltransferase (239 aa).

S-adenosyl-L-methionine-binding positions include Val-55, Glu-77, 79 to 80, Ser-85, Asp-103, and Ala-132; that span reads GV. Asp-155 provides a ligand contact to a divalent metal cation. Asp-157 is a binding site for S-adenosyl-L-methionine. Positions 181 and 182 each coordinate a divalent metal cation.

Belongs to the class I-like SAM-binding methyltransferase superfamily. Cation-dependent O-methyltransferase family. It depends on Mg(2+) as a cofactor. Highly expressed in bulbs. Detected in leaves and inflorescences.

It carries out the reaction norbelladine + S-adenosyl-L-methionine = 4'-O-methylnorbelladine + S-adenosyl-L-homocysteine + H(+). Its pathway is alkaloid biosynthesis. 4'-O-methyltransferase converting norbelladine to 4'-O-methylnorbelladine. 4'-O-methylnorbelladine is a precursor to all Amaryllidaceae alkaloids such as galanthamine, lycorine and haemanthamine, and including haemanthamine- and crinamine-type alkaloids, promising anticancer agents. Can use norbelladine, N-methylnorbelladine and dopamine as substrate, but not caffeic acid, vanillin, 3,4-dihydroxybenzaldehyde and tyramine. The protein is Norbelladine 4'-O-methyltransferase of Narcissus aff. pseudonarcissus MK-2014 (Daffodil).